The primary structure comprises 1191 residues: Probable inositol polyphosphate 5-phosphatase C9G1.10c (1191 aa).

5 stretches are compositionally biased toward polar residues: residues 1–10 (MASRQGFSNV), 72–101 (QVSSTIGSSTGRKVSGSIQRLASNFKNPSN), 114–135 (SDSSESHVATPSSPTISNSFVS), 151–161 (SFQSSVQSTKG), and 181–193 (NFSSKAGSSSPIS). The disordered stretch occupies residues 1-193 (MASRQGFSNV…SKAGSSSPIS (193 aa)). Serine 195 is subject to Phosphoserine. 3 disordered regions span residues 205–281 (SQSP…PQPV), 294–334 (SQQL…DASL), and 355–425 (IPEK…SSSS). The span at 268–280 (TPPPIPSPRPPQP) shows a compositional bias: pro residues. Over residues 302–311 (SPRKPPKPPL) the composition is skewed to basic residues. Polar residues-rich tracts occupy residues 316 to 334 (TQRSSSPIENLATKSDASL), 367 to 382 (HTLSELSSPALTSENL), and 400 to 413 (LATNKPVSMPVSTE). The span at 414 to 425 (QSDPSVAASSSS) shows a compositional bias: low complexity.

It belongs to the inositol 1,4,5-trisphosphate 5-phosphatase family.

Its subcellular location is the cytoplasm. This chain is Probable inositol polyphosphate 5-phosphatase C9G1.10c, found in Schizosaccharomyces pombe (strain 972 / ATCC 24843) (Fission yeast).